A 972-amino-acid chain; its full sequence is 116 kDa U5 small nuclear ribonucleoprotein component (972 aa).

The residue at position 1 (M1) is an N-acetylmethionine. Residues 1–54 (MDTDLYDEFGNYIGPELDSDEDDDELGRETKDLDEMDDDDDDDDIGDHDDDHPG) form a disordered region. Acidic residues-rich tracts occupy residues 17 to 26 (LDSDEDDDEL) and 34 to 48 (DEMDDDDDDDDIGDH). S19 bears the Phosphoserine mark. Residue K64 forms a Glycyl lysine isopeptide (Lys-Gly) (interchain with G-Cter in SUMO1); alternate linkage. Residue K64 forms a Glycyl lysine isopeptide (Lys-Gly) (interchain with G-Cter in SUMO2); alternate linkage. Residue T86 is modified to Phosphothreonine. One can recognise a tr-type G domain in the interval 127–409 (ELIRNVTLCG…GIHLTKEELK (283 aa)). GTP contacts are provided by residues 136–143 (GHLHHGKT), 204–208 (DTPGH), and 258–261 (NKID).

Belongs to the TRAFAC class translation factor GTPase superfamily. Classic translation factor GTPase family. EF-G/EF-2 subfamily. Component of the U5 snRNP and the U4/U6-U5 tri-snRNP complex, a building block of the spliceosome. The U4/U6-U5 tri-snRNP complex is composed of the U4, U6 and U5 snRNAs and at least PRPF3, PRPF4, PRPF6, PRPF8, PRPF31, SNRNP200, TXNL4A, SNRNP40, DDX23, CD2BP2, PPIH, SNU13, EFTUD2, SART1 and USP39. Component of the pre-catalytic, catalytic and post-catalytic spliceosome complexes. Component of the minor spliceosome, which splices U12-type introns. Within this complex, interacts with CRIPT. Interacts with ERBB4 and PRPF8. Interacts with PIH1D1. Interacts with RPAP3 and URI1 in a ZNHIT2-dependent manner. Interacts with NRDE2. Interacts with FAM50A. Interacts with UBL5.

The protein localises to the nucleus. In terms of biological role, required for pre-mRNA splicing as component of the spliceosome, including pre-catalytic, catalytic and post-catalytic spliceosomal complexes. Component of the U5 snRNP and the U4/U6-U5 tri-snRNP complex, a building block of the spliceosome. As a component of the minor spliceosome, involved in the splicing of U12-type introns in pre-mRNAs. The protein is 116 kDa U5 small nuclear ribonucleoprotein component (EFTUD2) of Pongo abelii (Sumatran orangutan).